We begin with the raw amino-acid sequence, 177 residues long: tRNA (cytidine(56)-2'-O)-methyltransferase (177 aa).

Residues Leu84 and 109-113 (GAEKV) each bind S-adenosyl-L-methionine.

The protein belongs to the aTrm56 family. Homodimer.

The protein resides in the cytoplasm. The enzyme catalyses cytidine(56) in tRNA + S-adenosyl-L-methionine = 2'-O-methylcytidine(56) in tRNA + S-adenosyl-L-homocysteine + H(+). Its function is as follows. Specifically catalyzes the AdoMet-dependent 2'-O-ribose methylation of cytidine at position 56 in tRNAs. This chain is tRNA (cytidine(56)-2'-O)-methyltransferase, found in Methanosarcina mazei (strain ATCC BAA-159 / DSM 3647 / Goe1 / Go1 / JCM 11833 / OCM 88) (Methanosarcina frisia).